Here is a 622-residue protein sequence, read N- to C-terminus: Apical membrane antigen 1 (622 aa).

The first 24 residues, 1 to 24 (MRKLYCVLLLSAFEFTYMINFGRG), serve as a signal peptide directing secretion. Over 25–546 (QNYWEHPYQK…EHKPTYDKMK (522 aa)) the chain is Extracellular. 5 disulfides stabilise this stretch: Cys-149–Cys-302, Cys-217–Cys-247, Cys-263–Cys-275, Cys-320–Cys-418, and Cys-337–Cys-409. An N-linked (GlcNAc...) asparagine glycan is attached at Asn-162. Residues Asn-286, Asn-371, Asn-421, Asn-422, and Asn-499 are each glycosylated (N-linked (GlcNAc...) asparagine). 3 disulfide bridges follow: Cys-443-Cys-502, Cys-490-Cys-507, and Cys-492-Cys-509. A helical transmembrane segment spans residues 547-567 (IIIASSAAVAVLATILMVYLY). The Cytoplasmic segment spans residues 568-622 (KRKGNAEKYDKMDEPQDYGKSNSRNDEMLDPEASFWGEEKRASHTTPVLMEKPYY). The segment at 577-607 (DKMDEPQDYGKSNSRNDEMLDPEASFWGEEK) is disordered.

This sequence belongs to the apicomplexan parasites AMA1 family.

The protein localises to the membrane. Its function is as follows. Involved in parasite invasion of erythrocytes. The polypeptide is Apical membrane antigen 1 (AMA-1) (Plasmodium falciparum (isolate 7G8)).